A 151-amino-acid polypeptide reads, in one-letter code: 3-hydroxyacyl-[acyl-carrier-protein] dehydratase FabZ (151 aa).

The active site involves His56.

This sequence belongs to the thioester dehydratase family. FabZ subfamily.

The protein resides in the cytoplasm. It catalyses the reaction a (3R)-hydroxyacyl-[ACP] = a (2E)-enoyl-[ACP] + H2O. Functionally, involved in unsaturated fatty acids biosynthesis. Catalyzes the dehydration of short chain beta-hydroxyacyl-ACPs and long chain saturated and unsaturated beta-hydroxyacyl-ACPs. The chain is 3-hydroxyacyl-[acyl-carrier-protein] dehydratase FabZ from Nitrobacter winogradskyi (strain ATCC 25391 / DSM 10237 / CIP 104748 / NCIMB 11846 / Nb-255).